A 187-amino-acid chain; its full sequence is T-cell receptor-associated transmembrane adapter 1 (187 aa).

At 1–7 (MSGSSGC) the chain is on the extracellular side. The helical; Signal-anchor for type III membrane protein transmembrane segment at 8–28 (PFFLWGLLAFLGLALVISLIF) threads the bilayer. At 29-187 (NISHYVEKQR…LIRAKREPVI (159 aa)) the chain is on the cytoplasmic side. Ser46 carries the post-translational modification Phosphoserine. Phosphotyrosine is present on Tyr80. Residues 80–83 (YEQM) form an interaction with PIK3R1 region. Residues 117–138 (SVKGKRRRPRKQNTNVSDRGKD) form a disordered region.

As to quaternary structure, homodimer; disulfide-linked. Interacts with CD3Z. When phosphorylated, interacts with PIK3R1. Phosphorylated on tyrosines upon TCR activation. In terms of tissue distribution, present in T-cells (at protein level).

It is found in the cell membrane. Functionally, stabilizes the TCR (T-cell antigen receptor)/CD3 complex at the surface of T-cells. The chain is T-cell receptor-associated transmembrane adapter 1 (Trat1) from Mus musculus (Mouse).